We begin with the raw amino-acid sequence, 182 residues long: MHSDAFDLKALIRPVVDFPKPGVIFRDITPLFQSPRGLRYVADQFIERYVEAEFSHIGAMDARGFLIGSIIAHQLNKPLILFRKQGKLPADVLSEGYQTEYGEAFLEVHADSLCEGDSVLIFDDLIATGGTLLAAANLVRRTGAQVFEAAAIIDLPELDGSRRLQAAGVPTFCLTEFSLSEY.

This sequence belongs to the purine/pyrimidine phosphoribosyltransferase family. In terms of assembly, homodimer.

It is found in the cytoplasm. The catalysed reaction is AMP + diphosphate = 5-phospho-alpha-D-ribose 1-diphosphate + adenine. Its pathway is purine metabolism; AMP biosynthesis via salvage pathway; AMP from adenine: step 1/1. Catalyzes a salvage reaction resulting in the formation of AMP, that is energically less costly than de novo synthesis. In Pseudomonas putida (strain GB-1), this protein is Adenine phosphoribosyltransferase.